The following is a 101-amino-acid chain: HssA/B-like protein 40 (101 aa).

Residues M1 to S26 form a disordered region.

Belongs to the hssA/B family.

This is HssA/B-like protein 40 (hssl40) from Dictyostelium discoideum (Social amoeba).